A 967-amino-acid polypeptide reads, in one-letter code: Disks large homolog 1 (967 aa).

Residues Ser5–Arg65 enclose the L27 domain. Positions Asn202–Lys289 constitute a PDZ 1 domain. Residues Ile324–Gln351 form a disordered region. A compositionally biased stretch (pro residues) spans Pro330–Val339. PDZ domains are found at residues Val361–Thr448 and Pro510–Pro591. An SH3 domain is found at Arg619–Glu690. The segment at Glu673 to Ser723 is disordered. A compositionally biased stretch (basic residues) spans Ser682–Gln696. The segment covering Val697–Leu715 has biased composition (polar residues). The region spanning Val769–Ser955 is the Guanylate kinase-like domain.

Belongs to the MAGUK family. In terms of assembly, homooligomerizes; requires L27 domain. Interacts (via L27 domain) with ajm-1; the interaction regulates ajm-1 apical junction location. In terms of tissue distribution, expressed in the apical junctions in the hypodermis. Expressed in epithelial cells in the reproductive system including vulva, uterus and spermatheca.

It localises to the membrane. Its subcellular location is the apical cell membrane. The protein localises to the cell junction. It is found in the adherens junction. The protein resides in the lateral cell membrane. It localises to the cytoplasm. Essential multidomain scaffolding protein required for normal development. Recruits channels, receptors and signaling molecules to discrete plasma membrane domains in polarized cells. Required for proper embryonic elongation. Acts upstream of ajm-1 and becomes localized to apical junctions independently of ajm-1. With let-413, cooperatively regulates ajm-1 localization to apical junctions and the establishment of newly formed epithelia. Plays a role in assembling the adherens junction by clustering ajm-1 and other proteins, to form electron-dense structures; may form a compartment distinct to that of hmp-1 and associated proteins. Plays a role in the directed outgrowth of seam cells, towards neighboring seam cells, during larval development. This Caenorhabditis elegans protein is Disks large homolog 1.